Consider the following 98-residue polypeptide: Guanine nucleotide-binding protein subunit gamma 1 (98 aa).

A G protein gamma domain is found at 19 to 98 (GKHRILAELA…GGEGCRCLIL (80 aa)). Positions 20–50 (KHRILAELARVEQEVAFLEKELKEVENTDIV) form a coiled coil. The segment at 88–94 (NGGEGCR) is regulates lipidation and cell membrane subcellular localization. A lipid anchor (S-palmitoyl cysteine) is attached at Cys-93. Position 95 is a cysteine methyl ester (Cys-95). Cys-95 carries S-farnesyl cysteine lipidation. Residues 96 to 98 (LIL) constitute a propeptide, removed in mature form.

G proteins are composed of 3 units, alpha, beta and gamma. Interacts with the beta subunit GB1. The dimer GB1-GG1 interacts with NDL1, NDL2 and NDL3. Binds to NUDT7. In terms of tissue distribution, mostly expressed in seedlings (especially at the hypocotyl/root junction), young cauline leaves, open flowers, and floral stems, and, to a lower extent, in roots (restricted to the stele), rosette leaves (restricted to veins), siliques, and unopened floral buds. Also present in hydathods.

The protein resides in the cell membrane. It is found in the golgi apparatus membrane. Its subcellular location is the golgi apparatus. The protein localises to the trans-Golgi network membrane. It localises to the cytoplasm. In terms of biological role, guanine nucleotide-binding proteins (G proteins) are involved as a modulator or transducer in various transmembrane signaling systems. The beta and gamma chains are required for the GTPase activity, for replacement of GDP by GTP, and for G protein-effector interaction. Involved in the abscisic acid (ABA) and ethylene signaling pathways. Regulates acropetal transport of auxin (IAA) in roots and hypocotyls, and thus modulates root architecture (e.g. lateral root formation). The heterotrimeric G-protein controls defense responses to necrotrophic and vascular fungi probably by modulating cell wall-related genes expression; involved in resistance to fungal pathogens such as Alternaria brassicicola, Plectosphaerella cucumerina and Fusarium oxysporum. The protein is Guanine nucleotide-binding protein subunit gamma 1 (GG1) of Arabidopsis thaliana (Mouse-ear cress).